Consider the following 398-residue polypeptide: Thyrotropin-releasing hormone receptor (398 aa).

Over 1-28 (MENETGSELNQTQLQPRAVVALEYQVVT) the chain is Extracellular. Residues Asn-3 and Asn-10 are each glycosylated (N-linked (GlcNAc...) asparagine). A helical membrane pass occupies residues 29-51 (ILLVLIICGLGIVGNIMVVLVVM). Residues 52–61 (RTKHMRTPTN) are Cytoplasmic-facing. The helical transmembrane segment at 62–83 (CYLVSLAVADLMVLVAAGLPNI) threads the bilayer. Residues 84–99 (TDSIYGSWVYGYVGCL) are Extracellular-facing. Residues Cys-98 and Cys-179 are joined by a disulfide bond. Residues 100–121 (CITYLQYLGINASSCSITAFTI) traverse the membrane as a helical segment. At 122 to 144 (ERYIAICHPIKAQFLCTFSRAKK) the chain is on the cytoplasmic side. Residues 145–168 (IIIFVWAFTSIYCMLWFFLLDLNI) form a helical membrane-spanning segment. At 169–193 (STYKDAIVVSCGYKISRNYYSPIYL) the chain is on the extracellular side. A helical membrane pass occupies residues 194 to 215 (MDFGVFYVVPMILATVLYGFIA). Residues 216–266 (RILFLSPIPSDPKENSNTWKNDSTHQNKNLNSKTSNRYFNSTVSSRKQVTK) lie on the Cytoplasmic side of the membrane. A helical transmembrane segment spans residues 267–288 (MLAVVVILFALLWMPYRTLVVV). The Extracellular segment spans residues 289–296 (NSFLSSPF). A helical transmembrane segment spans residues 297–319 (QENWFLLFCRICIYLNSAINPVI). At 320-398 (YNLMSQKFRA…LASEVTFSQS (79 aa)) the chain is on the cytoplasmic side.

Belongs to the G-protein coupled receptor 1 family.

The protein resides in the cell membrane. Functionally, receptor for thyrotropin-releasing hormone (TRH). Upon ligand binding, this G-protein-coupled receptor triggers activation of the phosphatidylinositol (IP3)-calcium-protein kinase C (PKC) pathway. This chain is Thyrotropin-releasing hormone receptor (TRHR), found in Ovis aries (Sheep).